We begin with the raw amino-acid sequence, 498 residues long: ATP synthase subunit beta, chloroplastic (498 aa).

An ATP-binding site is contributed by 172–179 (GGAGVGKT).

This sequence belongs to the ATPase alpha/beta chains family. As to quaternary structure, F-type ATPases have 2 components, CF(1) - the catalytic core - and CF(0) - the membrane proton channel. CF(1) has five subunits: alpha(3), beta(3), gamma(1), delta(1), epsilon(1). CF(0) has four main subunits: a(1), b(1), b'(1) and c(9-12).

Its subcellular location is the plastid. It is found in the chloroplast thylakoid membrane. The enzyme catalyses ATP + H2O + 4 H(+)(in) = ADP + phosphate + 5 H(+)(out). Functionally, produces ATP from ADP in the presence of a proton gradient across the membrane. The catalytic sites are hosted primarily by the beta subunits. This Nymphaea alba (White water-lily) protein is ATP synthase subunit beta, chloroplastic.